Reading from the N-terminus, the 83-residue chain is Small ribosomal subunit protein bS16 (83 aa).

Belongs to the bacterial ribosomal protein bS16 family.

The sequence is that of Small ribosomal subunit protein bS16 from Borrelia duttonii (strain Ly).